We begin with the raw amino-acid sequence, 201 residues long: MYB-like transcription factor EOBI (201 aa).

HTH myb-type domains follow at residues 10 to 62 (DVEV…LNYL) and 63 to 117 (RPDV…QKHI). 2 consecutive DNA-binding regions (H-T-H motif) follow at residues 38–62 (WNSL…LNYL) and 90–113 (WSKI…RTRI). The disordered stretch occupies residues 121–170 (DQNMKKPSKCEQNDQKAISTSQASTGPTDTIDSYSPSSYTENTNNNMENI). Residues 135 to 159 (QKAISTSQASTGPTDTIDSYSPSSY) show a composition bias toward polar residues. Residues 160–169 (TENTNNNMEN) show a composition bias toward low complexity.

As to expression, expressed exclusively in flower organs. Accumulates mostly in flower limbs, to a lower extent in pistils and flower tubes, and, at low levels, in stamens.

It localises to the nucleus. In terms of biological role, MYB-type transcription factor controlling the production of volatile organic compounds (VOCs), including floral volatile benzenoids and phenylpropanoids (FVBP), in flowers of fragrant cultivars (e.g. cv. Mitchell and cv. V26) by regulating the expression of ODO1, a key regulator of the shikimate pathway, and of several biosynthetic floral scent-related genes (e.g. IGS, EGS, BSMT1, BSMT2, PAL1, PAL2, EPSPS, DAHPS, CS, CM1, ADT1 and PPA-AT). Binds to and activates the promoters of at least ODO1, IGS1 and PAL1. This chain is MYB-like transcription factor EOBI, found in Petunia hybrida (Petunia).